Reading from the N-terminus, the 142-residue chain is Large ribosomal subunit protein uL11 (142 aa).

It belongs to the universal ribosomal protein uL11 family. As to quaternary structure, part of the ribosomal stalk of the 50S ribosomal subunit. Interacts with L10 and the large rRNA to form the base of the stalk. L10 forms an elongated spine to which L12 dimers bind in a sequential fashion forming a multimeric L10(L12)X complex. Post-translationally, one or more lysine residues are methylated.

Forms part of the ribosomal stalk which helps the ribosome interact with GTP-bound translation factors. This Buchnera aphidicola subsp. Schizaphis graminum (strain Sg) protein is Large ribosomal subunit protein uL11.